Here is a 485-residue protein sequence, read N- to C-terminus: UDP-N-acetylmuramoyl-L-alanyl-D-glutamate--2,6-diaminopimelate ligase (485 aa).

Serine 30 serves as a coordination point for UDP-N-acetyl-alpha-D-muramoyl-L-alanyl-D-glutamate. 111–117 provides a ligand contact to ATP; it reads GTNGKTT. Residues 153-154, serine 180, glutamine 186, and arginine 188 contribute to the UDP-N-acetyl-alpha-D-muramoyl-L-alanyl-D-glutamate site; that span reads TT. Lysine 220 is subject to N6-carboxylysine. Meso-2,6-diaminopimelate contacts are provided by residues arginine 378, 402-405, glycine 455, and glutamate 459; that span reads DNPR. The short motif at 402–405 is the Meso-diaminopimelate recognition motif element; the sequence is DNPR.

Belongs to the MurCDEF family. MurE subfamily. It depends on Mg(2+) as a cofactor. Post-translationally, carboxylation is probably crucial for Mg(2+) binding and, consequently, for the gamma-phosphate positioning of ATP.

It localises to the cytoplasm. It catalyses the reaction UDP-N-acetyl-alpha-D-muramoyl-L-alanyl-D-glutamate + meso-2,6-diaminopimelate + ATP = UDP-N-acetyl-alpha-D-muramoyl-L-alanyl-gamma-D-glutamyl-meso-2,6-diaminopimelate + ADP + phosphate + H(+). Its pathway is cell wall biogenesis; peptidoglycan biosynthesis. Catalyzes the addition of meso-diaminopimelic acid to the nucleotide precursor UDP-N-acetylmuramoyl-L-alanyl-D-glutamate (UMAG) in the biosynthesis of bacterial cell-wall peptidoglycan. The chain is UDP-N-acetylmuramoyl-L-alanyl-D-glutamate--2,6-diaminopimelate ligase from Bacteroides fragilis (strain ATCC 25285 / DSM 2151 / CCUG 4856 / JCM 11019 / LMG 10263 / NCTC 9343 / Onslow / VPI 2553 / EN-2).